A 159-amino-acid polypeptide reads, in one-letter code: Insertion element IS136 uncharacterized 16.9 kDa protein (159 aa).

Residues 126–142 (RSFVSPSSSTPSTARSS) are compositionally biased toward low complexity. The disordered stretch occupies residues 126-159 (RSFVSPSSSTPSTARSSPGRPLPMQAFPAQTCAT).

In Agrobacterium tumefaciens (strain T37), this protein is Insertion element IS136 uncharacterized 16.9 kDa protein.